The primary structure comprises 433 residues: LanC-like protein GCL1 (433 aa).

Residues 1–22 (MSSSVDFVTEQGRCGDDGNGAG) form a disordered region.

Belongs to the LanC-like protein family.

Functionally, may play a role in signaling. May be not involved in abscisic acid (ABA) signaling. This chain is LanC-like protein GCL1 (GCL1), found in Arabidopsis thaliana (Mouse-ear cress).